We begin with the raw amino-acid sequence, 315 residues long: Acetyl-coenzyme A carboxylase carboxyl transferase subunit alpha (315 aa).

Residues 40–293 (LEDKKIALTK…KKNVLAALDR (254 aa)) form the CoA carboxyltransferase C-terminal domain.

The protein belongs to the AccA family. As to quaternary structure, acetyl-CoA carboxylase is a heterohexamer composed of biotin carboxyl carrier protein (AccB), biotin carboxylase (AccC) and two subunits each of ACCase subunit alpha (AccA) and ACCase subunit beta (AccD).

It localises to the cytoplasm. The catalysed reaction is N(6)-carboxybiotinyl-L-lysyl-[protein] + acetyl-CoA = N(6)-biotinyl-L-lysyl-[protein] + malonyl-CoA. The protein operates within lipid metabolism; malonyl-CoA biosynthesis; malonyl-CoA from acetyl-CoA: step 1/1. Its function is as follows. Component of the acetyl coenzyme A carboxylase (ACC) complex. First, biotin carboxylase catalyzes the carboxylation of biotin on its carrier protein (BCCP) and then the CO(2) group is transferred by the carboxyltransferase to acetyl-CoA to form malonyl-CoA. This is Acetyl-coenzyme A carboxylase carboxyl transferase subunit alpha from Marinomonas sp. (strain MWYL1).